Here is a 232-residue protein sequence, read N- to C-terminus: Large ribosomal subunit protein uL1 (232 aa).

Belongs to the universal ribosomal protein uL1 family. In terms of assembly, part of the 50S ribosomal subunit.

In terms of biological role, binds directly to 23S rRNA. The L1 stalk is quite mobile in the ribosome, and is involved in E site tRNA release. Functionally, protein L1 is also a translational repressor protein, it controls the translation of the L11 operon by binding to its mRNA. The protein is Large ribosomal subunit protein uL1 of Azorhizobium caulinodans (strain ATCC 43989 / DSM 5975 / JCM 20966 / LMG 6465 / NBRC 14845 / NCIMB 13405 / ORS 571).